Consider the following 338-residue polypeptide: tRNA N6-adenosine threonylcarbamoyltransferase (338 aa).

Fe cation is bound by residues histidine 111 and histidine 115. Residues 134 to 138, aspartate 167, glycine 180, and asparagine 272 contribute to the substrate site; that span reads LVSGG. Residue aspartate 300 participates in Fe cation binding.

It belongs to the KAE1 / TsaD family. Fe(2+) is required as a cofactor.

The protein resides in the cytoplasm. It carries out the reaction L-threonylcarbamoyladenylate + adenosine(37) in tRNA = N(6)-L-threonylcarbamoyladenosine(37) in tRNA + AMP + H(+). Required for the formation of a threonylcarbamoyl group on adenosine at position 37 (t(6)A37) in tRNAs that read codons beginning with adenine. Is involved in the transfer of the threonylcarbamoyl moiety of threonylcarbamoyl-AMP (TC-AMP) to the N6 group of A37, together with TsaE and TsaB. TsaD likely plays a direct catalytic role in this reaction. The chain is tRNA N6-adenosine threonylcarbamoyltransferase from Nitrosomonas eutropha (strain DSM 101675 / C91 / Nm57).